Reading from the N-terminus, the 256-residue chain is D-aminoacyl-tRNA deacylase (256 aa).

This sequence belongs to the DtdA deacylase family. In terms of assembly, monomer. The cofactor is Zn(2+).

It catalyses the reaction a D-aminoacyl-tRNA + H2O = a tRNA + a D-alpha-amino acid + H(+). The enzyme catalyses glycyl-tRNA(Ala) + H2O = tRNA(Ala) + glycine + H(+). In terms of biological role, D-aminoacyl-tRNA deacylase with broad substrate specificity. By recycling D-aminoacyl-tRNA to D-amino acids and free tRNA molecules, this enzyme counteracts the toxicity associated with the formation of D-aminoacyl-tRNA entities in vivo. The chain is D-aminoacyl-tRNA deacylase from Thermoplasma acidophilum (strain ATCC 25905 / DSM 1728 / JCM 9062 / NBRC 15155 / AMRC-C165).